Reading from the N-terminus, the 660-residue chain is Arginine--tRNA ligase, cytoplasmic (660 aa).

The residue at position 1 (M1) is an N-acetylmethionine. Positions 1-72 (MDVLVSECSA…QAERNKPTKN (72 aa)) are could be involved in the assembly of the multisynthetase complex. L-arginine contacts are provided by residues 200 to 202 (SPN), H211, Y384, D388, and Q412. A 'HIGH' region motif is present at residues 201–212 (PNIAKEMHVGHL). The interaction with tRNA stretch occupies residues 529–543 (NTAAYLLYAFTRIRS).

It belongs to the class-I aminoacyl-tRNA synthetase family. In terms of assembly, interacts (via N-terminus) with AIMP1 (via N-terminus); this stimulates its catalytic activity. Interacts (via N-terminus) with LARS2 (via C-terminus). Monomer. Part of a multisubunit complex that groups tRNA ligases for Arg (RARS1), Asp (DARS1), Gln (QARS1), Ile (IARS1), Leu (LARS1), Lys (KARS1), Met (MARS1) the bifunctional ligase for Glu and Pro (EPRS1) and the auxiliary subunits AIMP1/p43, AIMP2/p38 and EEF1E1/p18. Interacts with QARS1. Part of a complex composed of RARS1, QARS1 and AIMP1.

The protein localises to the cytoplasm. It is found in the cytosol. The catalysed reaction is tRNA(Arg) + L-arginine + ATP = L-arginyl-tRNA(Arg) + AMP + diphosphate. Functionally, forms part of a macromolecular complex that catalyzes the attachment of specific amino acids to cognate tRNAs during protein synthesis. Modulates the secretion of AIMP1 and may be involved in generation of the inflammatory cytokine EMAP2 from AIMP1. The sequence is that of Arginine--tRNA ligase, cytoplasmic from Homo sapiens (Human).